A 116-amino-acid chain; its full sequence is Large ribosomal subunit protein uL18 (116 aa).

The protein belongs to the universal ribosomal protein uL18 family. As to quaternary structure, part of the 50S ribosomal subunit; part of the 5S rRNA/L5/L18/L25 subcomplex. Contacts the 5S and 23S rRNAs.

Its function is as follows. This is one of the proteins that bind and probably mediate the attachment of the 5S RNA into the large ribosomal subunit, where it forms part of the central protuberance. The polypeptide is Large ribosomal subunit protein uL18 (Shewanella sediminis (strain HAW-EB3)).